A 196-amino-acid polypeptide reads, in one-letter code: Hypoxanthine/guanine phosphoribosyltransferase (196 aa).

The protein belongs to the purine/pyrimidine phosphoribosyltransferase family. Archaeal HPRT subfamily. Homodimer.

The protein localises to the cytoplasm. It carries out the reaction IMP + diphosphate = hypoxanthine + 5-phospho-alpha-D-ribose 1-diphosphate. The enzyme catalyses GMP + diphosphate = guanine + 5-phospho-alpha-D-ribose 1-diphosphate. The protein operates within purine metabolism; IMP biosynthesis via salvage pathway; IMP from hypoxanthine: step 1/1. In terms of biological role, catalyzes a salvage reaction resulting in the formation of IMP that is energically less costly than de novo synthesis. The sequence is that of Hypoxanthine/guanine phosphoribosyltransferase from Methanocaldococcus sp. (strain FS406-22).